Reading from the N-terminus, the 333-residue chain is Quinolinate synthase (333 aa).

The iminosuccinate site is built by histidine 41 and serine 58. Residue cysteine 103 participates in [4Fe-4S] cluster binding. Residues 129–131 and serine 146 each bind iminosuccinate; that span reads YIN. Cysteine 189 contributes to the [4Fe-4S] cluster binding site. Iminosuccinate is bound by residues 215–217 and threonine 232; that span reads HPE. A [4Fe-4S] cluster-binding site is contributed by cysteine 282.

The protein belongs to the quinolinate synthase family. Type 2 subfamily. Requires [4Fe-4S] cluster as cofactor.

The protein localises to the cytoplasm. The catalysed reaction is iminosuccinate + dihydroxyacetone phosphate = quinolinate + phosphate + 2 H2O + H(+). It participates in cofactor biosynthesis; NAD(+) biosynthesis; quinolinate from iminoaspartate: step 1/1. Catalyzes the condensation of iminoaspartate with dihydroxyacetone phosphate to form quinolinate. In Prochlorococcus marinus (strain MIT 9303), this protein is Quinolinate synthase.